We begin with the raw amino-acid sequence, 116 residues long: Protein TRACHEARY ELEMENT DIFFERENTIATION-RELATED 6 (116 aa).

At 1 to 24 the chain is on the extracellular side; sequence MASTDSVYRPTPTPDHDTTVVVVV. The helical transmembrane segment at 25–45 threads the bilayer; it reads FVSLGCVMFLAFLAFVIWFLI. Topologically, residues 46–116 are cytoplasmic; it reads KKRSRKHRER…GVGSSVVSRS (71 aa).

Interacts with CESA7/IRX3, a subunit of the secondary cell wall (SCW)-related cellulose synthase complex. Expressed preferentially in differentiating vessel elements in seedlings.

Its subcellular location is the cell membrane. It is found in the secreted. The protein localises to the cell wall. In terms of biological role, involved in the secondary cell wall (SCW) formation of vessel elements (e.g. protoxylem and metaxylem), thus promoting tracheary element (TE) differentiation. The polypeptide is Protein TRACHEARY ELEMENT DIFFERENTIATION-RELATED 6 (Arabidopsis thaliana (Mouse-ear cress)).